The following is a 237-amino-acid chain: B3 domain-containing protein Os03g0184500 (237 aa).

Residues Phe137 to Thr228 constitute a DNA-binding region (TF-B3).

It localises to the nucleus. The protein is B3 domain-containing protein Os03g0184500 of Oryza sativa subsp. japonica (Rice).